A 1001-amino-acid polypeptide reads, in one-letter code: E3 ubiquitin-protein ligase etc-1 (1001 aa).

Residues 28–57 form the IQ domain; sequence QEKAARKVQKFWRGHRVQHNQRLLFRAEFD. The stretch at 66 to 115 forms a coiled coil; sequence LEETIKMAQLLVNFYETNKDEERLVMTLSELVKLKTSDKEFEKRIRETQR. The 344-residue stretch at 658-1001 folds into the HECT domain; sequence KVNDLKSMVR…INSGAGFELA (344 aa). Cys-969 serves as the catalytic Glycyl thioester intermediate.

Interacts with ify-1 and cyb-1.

It catalyses the reaction S-ubiquitinyl-[E2 ubiquitin-conjugating enzyme]-L-cysteine + [acceptor protein]-L-lysine = [E2 ubiquitin-conjugating enzyme]-L-cysteine + N(6)-ubiquitinyl-[acceptor protein]-L-lysine.. The protein operates within protein modification; protein ubiquitination. In terms of biological role, E3 ubiquitin-protein ligase that accepts ubiquitin from E2 ubiquitin-conjugating enzymes, such as ubc-18, in the form of a thioester and then directly transfers the ubiquitin to targeted substrates. Ubiquitinates ify-1 and cyb-1 targeting them for degradation in post-meiotic embryos. This Caenorhabditis elegans protein is E3 ubiquitin-protein ligase etc-1.